The following is a 242-amino-acid chain: Agamous-like MADS-box protein MADS4 (242 aa).

One can recognise an MADS-box domain in the interval 1 to 61 (MGRGRVELKR…GKLYEFCSSS (61 aa)). Residues 89–185 (ELSSQQEYLK…GTQVNQLQWN (97 aa)) form the K-box domain.

In terms of tissue distribution, expressed in flowers and seeds.

The protein localises to the nucleus. In terms of biological role, probable transcription factor involved in flower development. In Vitis vinifera (Grape), this protein is Agamous-like MADS-box protein MADS4.